Consider the following 465-residue polypeptide: Probable M18 family aminopeptidase 1 (465 aa).

Zn(2+)-binding residues include H105, H180, and H441.

Belongs to the peptidase M18 family. Requires Zn(2+) as cofactor.

This Clostridium acetobutylicum (strain ATCC 824 / DSM 792 / JCM 1419 / IAM 19013 / LMG 5710 / NBRC 13948 / NRRL B-527 / VKM B-1787 / 2291 / W) protein is Probable M18 family aminopeptidase 1 (apeA).